Consider the following 957-residue polypeptide: Valine--tRNA ligase (957 aa).

The 'HIGH' region signature appears at 42–52 (PNVTGSLHMGH). Positions 554-558 (KMSKS) match the 'KMSKS' region motif. An ATP-binding site is contributed by Lys557. Positions 890–956 (DKDAELARLA…LEAQQETIAA (67 aa)) form a coiled coil.

Belongs to the class-I aminoacyl-tRNA synthetase family. ValS type 1 subfamily. In terms of assembly, monomer.

Its subcellular location is the cytoplasm. The enzyme catalyses tRNA(Val) + L-valine + ATP = L-valyl-tRNA(Val) + AMP + diphosphate. Functionally, catalyzes the attachment of valine to tRNA(Val). As ValRS can inadvertently accommodate and process structurally similar amino acids such as threonine, to avoid such errors, it has a 'posttransfer' editing activity that hydrolyzes mischarged Thr-tRNA(Val) in a tRNA-dependent manner. This is Valine--tRNA ligase from Aliivibrio fischeri (strain ATCC 700601 / ES114) (Vibrio fischeri).